The following is a 152-amino-acid chain: MFKEFREFAMRGNVIDLAVGVVIGAAFGSIVKSLVDDIIMPPIGLLIGKVNFADLFITLKAGATPGPYATVAAAKAAGAVTMNVGQFINSVVSFVLIAFSVFLLVKVVNRLYQKKDAAAPAPATRDCPFCATAIPLAATRCPHCTSQVPPAD.

2 consecutive transmembrane segments (helical) span residues 14 to 34 and 84 to 104; these read VIDL…VKSL and VGQF…VFLL.

This sequence belongs to the MscL family. As to quaternary structure, homopentamer.

It localises to the cell inner membrane. Channel that opens in response to stretch forces in the membrane lipid bilayer. May participate in the regulation of osmotic pressure changes within the cell. This chain is Large-conductance mechanosensitive channel, found in Laribacter hongkongensis (strain HLHK9).